A 201-amino-acid polypeptide reads, in one-letter code: Recombination protein RecR (201 aa).

The segment at cysteine 60–cysteine 75 adopts a C4-type zinc-finger fold. The Toprim domain occupies threonine 83–proline 178.

This sequence belongs to the RecR family.

In terms of biological role, may play a role in DNA repair. It seems to be involved in an RecBC-independent recombinational process of DNA repair. It may act with RecF and RecO. The protein is Recombination protein RecR of Beijerinckia indica subsp. indica (strain ATCC 9039 / DSM 1715 / NCIMB 8712).